The chain runs to 105 residues: Small ribosomal subunit protein uS10 (105 aa).

The protein belongs to the universal ribosomal protein uS10 family. As to quaternary structure, part of the 30S ribosomal subunit.

Its function is as follows. Involved in the binding of tRNA to the ribosomes. The polypeptide is Small ribosomal subunit protein uS10 (Chlamydia muridarum (strain MoPn / Nigg)).